Reading from the N-terminus, the 541-residue chain is Transcription termination factor MTERF4, chloroplastic (541 aa).

The N-terminal 45 residues, methionine 1 to lysine 45, are a transit peptide targeting the chloroplast. 2 disordered regions span residues serine 66–serine 103 and glutamate 503–alanine 541. Residues glycine 85–lysine 99 are compositionally biased toward basic and acidic residues. Positions aspartate 507 to methionine 517 are enriched in polar residues. Positions arginine 521–alanine 541 are enriched in acidic residues.

This sequence belongs to the mTERF family.

The protein localises to the plastid. Its subcellular location is the chloroplast. It is found in the mitochondrion. Functionally, transcription termination factor required for processing and steady-state levels of plastid transcripts. Required for splicing of the chloroplastic Clp protease (ClpP) group IIa intron. Required for maturation of 16S rRNA and 23S rRNA in the chloroplast. Essential for embryogenesis. Required for the maintenance of the correct levels of transcripts in the mitochondria and chloroplasts. The polypeptide is Transcription termination factor MTERF4, chloroplastic (Arabidopsis thaliana (Mouse-ear cress)).